We begin with the raw amino-acid sequence, 468 residues long: ATP synthase subunit beta (468 aa).

153–160 (GGAGVGKT) contributes to the ATP binding site.

It belongs to the ATPase alpha/beta chains family. In terms of assembly, F-type ATPases have 2 components, CF(1) - the catalytic core - and CF(0) - the membrane proton channel. CF(1) has five subunits: alpha(3), beta(3), gamma(1), delta(1), epsilon(1). CF(0) has three main subunits: a(1), b(2) and c(9-12). The alpha and beta chains form an alternating ring which encloses part of the gamma chain. CF(1) is attached to CF(0) by a central stalk formed by the gamma and epsilon chains, while a peripheral stalk is formed by the delta and b chains.

It localises to the cell inner membrane. It carries out the reaction ATP + H2O + 4 H(+)(in) = ADP + phosphate + 5 H(+)(out). In terms of biological role, produces ATP from ADP in the presence of a proton gradient across the membrane. The catalytic sites are hosted primarily by the beta subunits. The polypeptide is ATP synthase subunit beta (Nautilia profundicola (strain ATCC BAA-1463 / DSM 18972 / AmH)).